A 367-amino-acid polypeptide reads, in one-letter code: Putative isomerase YraM (367 aa).

Belongs to the PrpF family.

In Bacillus subtilis (strain 168), this protein is Putative isomerase YraM (yraM).